Consider the following 602-residue polypeptide: Myotubularin (602 aa).

The disordered stretch occupies residues 1 to 32 (MASNSTPKYNSNSLENSLRRSPGDGMNHEQND). The segment covering 17 to 31 (SLRRSPGDGMNHEQN) has biased composition (basic and acidic residues). The GRAM domain maps to 28–96 (HEQNDEIPCL…GVIARIEKMG (69 aa)). The region spanning 162 to 537 (GWAVYDAMTE…RHLELWVNYY (376 aa)) is the Myotubularin phosphatase domain. Residues asparagine 287, asparagine 312, and isoleucine 313 each coordinate a 1,2-diacyl-sn-glycero-3-phospho-(1D-myo-inositol-3,5-bisphosphate). 3 residues coordinate a 1,2-diacyl-sn-glycero-3-phospho-(1D-myo-inositol-3-phosphate): asparagine 287, asparagine 312, and isoleucine 313. Cysteine 374 functions as the Phosphocysteine intermediate in the catalytic mechanism. 8 residues coordinate a 1,2-diacyl-sn-glycero-3-phospho-(1D-myo-inositol-3,5-bisphosphate): serine 375, aspartate 376, glycine 377, tryptophan 378, aspartate 379, arginine 380, lysine 416, and arginine 420. Serine 375, aspartate 376, glycine 377, tryptophan 378, aspartate 379, and arginine 380 together coordinate a 1,2-diacyl-sn-glycero-3-phospho-(1D-myo-inositol-3-phosphate). Arginine 420 is a binding site for a 1,2-diacyl-sn-glycero-3-phospho-(1D-myo-inositol-3-phosphate). Residues 574 to 602 (QITNSPKMNSSTTSPSSPSQIMPQVHTPF) form a disordered region. A compositionally biased stretch (low complexity) spans 583–592 (SSTTSPSSPS).

Belongs to the protein-tyrosine phosphatase family. Non-receptor class myotubularin subfamily.

The protein resides in the cytoplasm. It localises to the cell membrane. The protein localises to the cell projection. Its subcellular location is the filopodium. It is found in the ruffle. The protein resides in the late endosome. It localises to the myofibril. The protein localises to the sarcomere. The enzyme catalyses a 1,2-diacyl-sn-glycero-3-phospho-(1D-myo-inositol-3-phosphate) + H2O = a 1,2-diacyl-sn-glycero-3-phospho-(1D-myo-inositol) + phosphate. It carries out the reaction a 1,2-diacyl-sn-glycero-3-phospho-(1D-myo-inositol-3,5-bisphosphate) + H2O = a 1,2-diacyl-sn-glycero-3-phospho-(1D-myo-inositol-5-phosphate) + phosphate. It catalyses the reaction 1,2-dioctanoyl-sn-glycero-3-phospho-(1-D-myo-inositol-3-phosphate) + H2O = 1,2-dioctanoyl-sn-glycero-3-phospho-(1D-myo-inositol) + phosphate. The catalysed reaction is 1,2-dioctanoyl-sn-glycero-3-phospho-(1D-myo-inositol-3,5-bisphosphate) + H2O = 1,2-dioctanoyl-sn-glycero-3-phospho-(1D-myo-inositol-5-phosphate) + phosphate. The enzyme catalyses 1,2-dihexadecanoyl-sn-glycero-3-phospho-(1D-myo-inositol-3,5-phosphate) + H2O = 1,2-dihexadecanoyl-sn-glycero-3-phospho-(1D-myo-inositol-5-phosphate) + phosphate. In terms of biological role, lipid phosphatase which dephosphorylates phosphatidylinositol 3-monophosphate (PI3P) and phosphatidylinositol 3,5-bisphosphate (PI(3,5)P2). In Xenopus tropicalis (Western clawed frog), this protein is Myotubularin (mtm1).